A 788-amino-acid chain; its full sequence is Cyclin-F (788 aa).

A Nuclear localization signal 1 motif is present at residues Lys-20–Arg-28. Residues Asn-29–Ala-76 form the F-box domain. Residues His-291–Ile-405 form the Cyclin N-terminal domain. 4 short sequence motifs (d box) span residues Arg-310–Leu-313, Arg-343–Leu-346, Arg-349–Leu-352, and Arg-351–Leu-354. Disordered stretches follow at residues Ser-566–Phe-585 and Thr-700–Leu-788. The Nuclear localization signal 2 motif lies at Arg-568 to Arg-574. A PEST region spans residues Arg-582–Lys-766. Composition is skewed to polar residues over residues Thr-700–Arg-716 and Arg-723–Pro-738. Positions Arg-767–Leu-770 match the D box 5 motif.

It belongs to the cyclin family. Cyclin AB subfamily. As to quaternary structure, component of the SCF(CCNF) complex consisting of CUL1, RBX1, SKP1 and CCNF. Interacts with SKP1. Interacts with CUL1. Interacts with CCNB1; interaction is required for nuclear localization of CCNB1. Interacts with CCP110; this interaction leads to CCP110 ubiquitination and degradation via the proteasome pathway. Interacts (via the Cyclin N-terminal domain) with MYBL2/BMYB. Interacts with FZR1/CDH1 (via N-terminus). Interacts with RRM2 (via Cy motif and when phosphorylated at 'Thr-33'); the interaction occurs exclusively in G2 and early M. Interacts with CDC6 (via Cy motif); the interaction takes place during G2 and M phase. Post-translationally, degraded when the spindle assembly checkpoint is activated during the G2-M transition. Degradation is not dependent on the proteasome or ubiquitin and depends on the C-terminal PEST sequence. Phosphorylated just before cells enter into mitosis. In terms of processing, ubiquitinated by the anaphase-promoting complex (APC/C); leading to its degradation by the proteasome.

Its subcellular location is the nucleus. It localises to the cytoplasm. The protein resides in the perinuclear region. It is found in the cytoskeleton. The protein localises to the microtubule organizing center. Its subcellular location is the centrosome. It localises to the centriole. Functionally, substrate recognition component of a SCF (SKP1-CUL1-F-box protein) E3 ubiquitin-protein ligase complex which mediates the ubiquitination and subsequent proteasomal degradation of target proteins. The SCF(CCNF) E3 ubiquitin-protein ligase complex is an integral component of the ubiquitin proteasome system (UPS) and links proteasome degradation to the cell cycle. Mediates the substrate recognition and the proteasomal degradation of various target proteins involved in the regulation of cell cycle progression and in the maintenance of genome stability. Mediates the ubiquitination and subsequent proteasomal degradation of CP110 during G2 phase, thereby acting as an inhibitor of centrosome reduplication. In G2, mediates the ubiquitination and proteasomal degradation of CDC6, thereby suppressing DNA re-replication and preventing genome instability. Involved in the ubiquitination and degradation of the substrate adapter CDH1 of the anaphase-promoting complex (APC/C), thereby acting as an antagonist of APC/C in regulating G1 progression and S phase entry. May play a role in the G2 cell cycle checkpoint control after DNA damage, possibly by promoting the ubiquitination of MYBL2/BMYB. The sequence is that of Cyclin-F (CCNF) from Bos taurus (Bovine).